We begin with the raw amino-acid sequence, 305 residues long: Ribosomal RNA small subunit methyltransferase H (305 aa).

S-adenosyl-L-methionine is bound by residues glycine 37–histidine 39, aspartate 57, phenylalanine 85, aspartate 101, and histidine 108.

This sequence belongs to the methyltransferase superfamily. RsmH family.

It localises to the cytoplasm. The catalysed reaction is cytidine(1402) in 16S rRNA + S-adenosyl-L-methionine = N(4)-methylcytidine(1402) in 16S rRNA + S-adenosyl-L-homocysteine + H(+). Its function is as follows. Specifically methylates the N4 position of cytidine in position 1402 (C1402) of 16S rRNA. This is Ribosomal RNA small subunit methyltransferase H from Parabacteroides distasonis (strain ATCC 8503 / DSM 20701 / CIP 104284 / JCM 5825 / NCTC 11152).